Reading from the N-terminus, the 104-residue chain is Large ribosomal subunit protein bL21c (104 aa).

Belongs to the bacterial ribosomal protein bL21 family. In terms of assembly, part of the 50S ribosomal subunit.

It localises to the plastid. Its subcellular location is the chloroplast. Functionally, this protein binds to 23S rRNA. The chain is Large ribosomal subunit protein bL21c from Porphyra purpurea (Red seaweed).